A 212-amino-acid chain; its full sequence is Pyridoxine/pyridoxamine 5'-phosphate oxidase (212 aa).

FMN contacts are provided by residues 57 to 62 (RMVLLK), 72 to 73 (YT), R78, K79, and Q101. K62 contacts substrate. Residues Y119, R123, and S127 each coordinate substrate. FMN-binding positions include 136-137 (QS) and W181. Position 187–189 (187–189 (RLH)) interacts with substrate. R191 lines the FMN pocket.

This sequence belongs to the pyridoxamine 5'-phosphate oxidase family. As to quaternary structure, homodimer. It depends on FMN as a cofactor.

It carries out the reaction pyridoxamine 5'-phosphate + O2 + H2O = pyridoxal 5'-phosphate + H2O2 + NH4(+). The enzyme catalyses pyridoxine 5'-phosphate + O2 = pyridoxal 5'-phosphate + H2O2. It participates in cofactor metabolism; pyridoxal 5'-phosphate salvage; pyridoxal 5'-phosphate from pyridoxamine 5'-phosphate: step 1/1. It functions in the pathway cofactor metabolism; pyridoxal 5'-phosphate salvage; pyridoxal 5'-phosphate from pyridoxine 5'-phosphate: step 1/1. Its function is as follows. Catalyzes the oxidation of either pyridoxine 5'-phosphate (PNP) or pyridoxamine 5'-phosphate (PMP) into pyridoxal 5'-phosphate (PLP). The sequence is that of Pyridoxine/pyridoxamine 5'-phosphate oxidase from Erythrobacter litoralis (strain HTCC2594).